A 229-amino-acid chain; its full sequence is Non-structural protein V (229 aa).

The tract at residues 28-115 is disordered; that stretch reads LGATSQPPPN…DTQSPSPSKT (88 aa). Residues 45–55 are compositionally biased toward basic and acidic residues; that stretch reads KTEENNDETRT. Over residues 59–71 the composition is skewed to low complexity; that stretch reads SASAEAPAHASSP. Polar residues-rich tracts occupy residues 82 to 97 and 105 to 115; these read GKQS…NRPQ and SDTQSPSPSKT. Residues His-178, Cys-197, Cys-201, Cys-213, Cys-215, Cys-218, Cys-222, and Cys-225 each contribute to the Zn(2+) site.

It belongs to the paramyxoviruses V protein family.

In terms of biological role, blocks host interferon signaling. The polypeptide is Non-structural protein V (P/V) (Human parainfluenza 4b virus (strain 68-333) (HPIV-4b)).